A 251-amino-acid polypeptide reads, in one-letter code: MSGEEKLGKLRAKLKEITEQIDDADQKKVEAKHALVDSLARLEKNEVEVNSAKRRIKLIEKDLEDSSERLKVAEEKLIKVEAEEKKIEEARNLLEEAESADDEKMYNIEEEFKESKRTLESNETKYIEAQRKGVVISRDVEKTRDKADTLEKRVAVLEQTIASAGESLVELEEREGESSEREEINEEKLIFLAGQFKESEVRAEAAERSCNVLERNIFETENEINTWIQKRKEIEDEMIEMDTVADEPDDE.

Residues 1–251 (MSGEEKLGKL…DTVADEPDDE (251 aa)) are a coiled coil.

The protein belongs to the tropomyosin family. Homodimer. Striated muscle specific.

This is Tropomyosin-2 (TPM2) from Podocoryna carnea (Hydrozoan).